We begin with the raw amino-acid sequence, 142 residues long: Large ribosomal subunit protein uL16 (142 aa).

It belongs to the universal ribosomal protein uL16 family. Part of the 50S ribosomal subunit.

In terms of biological role, binds 23S rRNA and is also seen to make contacts with the A and possibly P site tRNAs. The polypeptide is Large ribosomal subunit protein uL16 (Thermosipho africanus (strain TCF52B)).